Consider the following 311-residue polypeptide: Malate dehydrogenase (311 aa).

NAD(+) is bound by residues 7–13 (GAAGGIG) and Asp-34. Residues Arg-81 and Arg-87 each contribute to the substrate site. NAD(+) contacts are provided by residues Asn-94 and 117-119 (ITN). Substrate is bound by residues Asn-119 and Arg-153. His-177 serves as the catalytic Proton acceptor. An NAD(+)-binding site is contributed by Met-227.

This sequence belongs to the LDH/MDH superfamily. MDH type 1 family. Homodimer.

It catalyses the reaction (S)-malate + NAD(+) = oxaloacetate + NADH + H(+). In terms of biological role, catalyzes the reversible oxidation of malate to oxaloacetate. The protein is Malate dehydrogenase of Shewanella sediminis (strain HAW-EB3).